Reading from the N-terminus, the 237-residue chain is Ribosomal RNA small subunit methyltransferase G (237 aa).

S-adenosyl-L-methionine is bound by residues Gly78, Phe83, 129-130 (AE), and Arg148.

It belongs to the methyltransferase superfamily. RNA methyltransferase RsmG family.

It is found in the cytoplasm. Functionally, specifically methylates the N7 position of a guanine in 16S rRNA. The sequence is that of Ribosomal RNA small subunit methyltransferase G from Streptococcus pyogenes serotype M12 (strain MGAS9429).